We begin with the raw amino-acid sequence, 392 residues long: Dihydroorotate dehydrogenase (quinone) (392 aa).

Residues 90–94 (AGFDK) and Thr-114 contribute to the FMN site. Lys-94 contacts substrate. 139 to 143 (NRMGF) provides a ligand contact to substrate. Residues Asn-173 and Asn-206 each contribute to the FMN site. Residue Asn-206 participates in substrate binding. Residue Ser-209 is the Nucleophile of the active site. Asn-211 is a substrate binding site. FMN is bound by residues Lys-243 and Val-271. Residue 272–273 (NT) participates in substrate binding. FMN contacts are provided by residues Gly-301, Gly-330, and 351–352 (YT).

Belongs to the dihydroorotate dehydrogenase family. Type 2 subfamily. In terms of assembly, monomer. It depends on FMN as a cofactor.

It is found in the cell membrane. It carries out the reaction (S)-dihydroorotate + a quinone = orotate + a quinol. It functions in the pathway pyrimidine metabolism; UMP biosynthesis via de novo pathway; orotate from (S)-dihydroorotate (quinone route): step 1/1. Its function is as follows. Catalyzes the conversion of dihydroorotate to orotate with quinone as electron acceptor. The sequence is that of Dihydroorotate dehydrogenase (quinone) from Prochlorococcus marinus (strain MIT 9313).